We begin with the raw amino-acid sequence, 150 residues long: Anti-sigma F factor (150 aa).

The protein belongs to the anti-sigma-factor family.

The enzyme catalyses L-seryl-[protein] + ATP = O-phospho-L-seryl-[protein] + ADP + H(+). The catalysed reaction is L-threonyl-[protein] + ATP = O-phospho-L-threonyl-[protein] + ADP + H(+). Its function is as follows. Binds to sigma F and blocks its ability to form an RNA polymerase holoenzyme (E-sigma F). Phosphorylates SpoIIAA on a serine residue. This phosphorylation may enable SpoIIAA to act as an anti-anti-sigma factor that counteracts SpoIIAB and thus releases sigma F from inhibition. The chain is Anti-sigma F factor from Pasteuria penetrans.